A 90-amino-acid chain; its full sequence is ATP-dependent Clp protease adapter protein ClpS (90 aa).

The protein belongs to the ClpS family. In terms of assembly, binds to the N-terminal domain of the chaperone ClpA.

Its function is as follows. Involved in the modulation of the specificity of the ClpAP-mediated ATP-dependent protein degradation. The chain is ATP-dependent Clp protease adapter protein ClpS from Helicobacter pylori (strain J99 / ATCC 700824) (Campylobacter pylori J99).